Reading from the N-terminus, the 345-residue chain is Phosphoribosylformylglycinamidine cyclo-ligase (345 aa).

It belongs to the AIR synthase family.

Its subcellular location is the cytoplasm. It carries out the reaction 2-formamido-N(1)-(5-O-phospho-beta-D-ribosyl)acetamidine + ATP = 5-amino-1-(5-phospho-beta-D-ribosyl)imidazole + ADP + phosphate + H(+). The protein operates within purine metabolism; IMP biosynthesis via de novo pathway; 5-amino-1-(5-phospho-D-ribosyl)imidazole from N(2)-formyl-N(1)-(5-phospho-D-ribosyl)glycinamide: step 2/2. The polypeptide is Phosphoribosylformylglycinamidine cyclo-ligase (Shewanella sp. (strain ANA-3)).